Here is a 461-residue protein sequence, read N- to C-terminus: Bifunctional protein GlmU (461 aa).

The interval 1 to 229 (MNKYVVILAA…FSESLGVNDR (229 aa)) is pyrophosphorylase. Residues 8–11 (LAAG), Lys22, Gln72, and 77–78 (GT) contribute to the UDP-N-acetyl-alpha-D-glucosamine site. A Mg(2+)-binding site is contributed by Asp102. 4 residues coordinate UDP-N-acetyl-alpha-D-glucosamine: Gly139, Glu154, Asn169, and Asn227. Asn227 is a Mg(2+) binding site. The segment at 230-250 (IALAQATKIMQRRINEEHMRN) is linker. Residues 251–461 (GVSFIDPDTA…LPLAKDKEWE (211 aa)) are N-acetyltransferase. Residues Arg332 and Lys350 each contribute to the UDP-N-acetyl-alpha-D-glucosamine site. His362 serves as the catalytic Proton acceptor. Positions 365 and 376 each coordinate UDP-N-acetyl-alpha-D-glucosamine. Acetyl-CoA contacts are provided by residues 385–386 (NY), Ala422, and Arg439.

It in the N-terminal section; belongs to the N-acetylglucosamine-1-phosphate uridyltransferase family. The protein in the C-terminal section; belongs to the transferase hexapeptide repeat family. In terms of assembly, homotrimer. Mg(2+) is required as a cofactor.

Its subcellular location is the cytoplasm. It catalyses the reaction alpha-D-glucosamine 1-phosphate + acetyl-CoA = N-acetyl-alpha-D-glucosamine 1-phosphate + CoA + H(+). It carries out the reaction N-acetyl-alpha-D-glucosamine 1-phosphate + UTP + H(+) = UDP-N-acetyl-alpha-D-glucosamine + diphosphate. It participates in nucleotide-sugar biosynthesis; UDP-N-acetyl-alpha-D-glucosamine biosynthesis; N-acetyl-alpha-D-glucosamine 1-phosphate from alpha-D-glucosamine 6-phosphate (route II): step 2/2. It functions in the pathway nucleotide-sugar biosynthesis; UDP-N-acetyl-alpha-D-glucosamine biosynthesis; UDP-N-acetyl-alpha-D-glucosamine from N-acetyl-alpha-D-glucosamine 1-phosphate: step 1/1. Its pathway is bacterial outer membrane biogenesis; LPS lipid A biosynthesis. Catalyzes the last two sequential reactions in the de novo biosynthetic pathway for UDP-N-acetylglucosamine (UDP-GlcNAc). The C-terminal domain catalyzes the transfer of acetyl group from acetyl coenzyme A to glucosamine-1-phosphate (GlcN-1-P) to produce N-acetylglucosamine-1-phosphate (GlcNAc-1-P), which is converted into UDP-GlcNAc by the transfer of uridine 5-monophosphate (from uridine 5-triphosphate), a reaction catalyzed by the N-terminal domain. This is Bifunctional protein GlmU from Lactobacillus johnsonii (strain CNCM I-12250 / La1 / NCC 533).